Here is a 574-residue protein sequence, read N- to C-terminus: 5'-nucleotidase (574 aa).

The first 26 residues, 1-26, serve as a signal peptide directing secretion; the sequence is MNPGAARTPALRILALGALLWPAARP. The Zn(2+) site is built by D36 and H38. An intrachain disulfide couples C51 to C57. The N-linked (GlcNAc...) asparagine glycan is linked to N53. 4 residues coordinate Zn(2+): D85, N117, H220, and H243. N-linked (GlcNAc...) asparagine glycans are attached at residues N311 and N333. Cystine bridges form between C353/C358 and C365/C387. R354 contacts AMP. R354 is a binding site for IMP. N390 and R395 together coordinate AMP. IMP-binding residues include N390 and R395. Residue N403 is glycosylated (N-linked (GlcNAc...) asparagine). Residue F417 coordinates AMP. F417 serves as a coordination point for IMP. A disulfide bridge connects residues C476 and C479. AMP-binding residues include F500 and D506. IMP contacts are provided by F500 and D506. The GPI-anchor amidated serine moiety is linked to residue S549. Positions 550 to 574 are cleaved as a propeptide — removed in mature form; the sequence is AGSHCCGSFSLIFLSVLAVIIILYQ.

Belongs to the 5'-nucleotidase family. In terms of assembly, homodimer. It depends on Zn(2+) as a cofactor.

It is found in the cell membrane. The enzyme catalyses a ribonucleoside 5'-phosphate + H2O = a ribonucleoside + phosphate. The catalysed reaction is a 2'-deoxyribonucleoside 5'-phosphate + H2O = a 2'-deoxyribonucleoside + phosphate. It carries out the reaction dTMP + H2O = thymidine + phosphate. It catalyses the reaction CMP + H2O = cytidine + phosphate. The enzyme catalyses IMP + H2O = inosine + phosphate. The catalysed reaction is AMP + H2O = adenosine + phosphate. It carries out the reaction GMP + H2O = guanosine + phosphate. It catalyses the reaction UMP + H2O = uridine + phosphate. The enzyme catalyses dAMP + H2O = 2'-deoxyadenosine + phosphate. The catalysed reaction is dCMP + H2O = 2'-deoxycytidine + phosphate. In terms of biological role, catalyzes the hydrolysis of nucleotide monophosphates, releasing inorganic phosphate and the corresponding nucleoside, with AMP being the preferred substrate. Shows a preference for ribonucleotide monophosphates over their equivalent deoxyribose forms. Other substrates include IMP, UMP, GMP, CMP, dAMP, dCMP, dTMP, NAD and NMN. This Bos taurus (Bovine) protein is 5'-nucleotidase (NT5E).